We begin with the raw amino-acid sequence, 355 residues long: Proto-oncogene Wnt-3 (355 aa).

The signal sequence occupies residues 1–21 (MEPHLLGLLLGLLLGGTRVLA). Disulfide bonds link C80-C91, C131-C139, C141-C158, C206-C220, C208-C215, C284-C315, C300-C310, C314-C354, C330-C345, C332-C342, and C337-C338. Residue N90 is glycosylated (N-linked (GlcNAc...) asparagine). S212 carries the O-palmitoleoyl serine; by PORCN lipid modification. Residue N301 is glycosylated (N-linked (GlcNAc...) asparagine).

The protein belongs to the Wnt family. Forms a soluble 1:1 complex with AFM; this prevents oligomerization and is required for prolonged biological activity. The complex with AFM may represent the physiological form in body fluids. Interacts with PORCN. Interacts with WLS. Post-translationally, palmitoleoylation is required for efficient binding to frizzled receptors. Depalmitoleoylation leads to Wnt signaling pathway inhibition.

The protein resides in the secreted. Its subcellular location is the extracellular space. The protein localises to the extracellular matrix. Functionally, ligand for members of the frizzled family of seven transmembrane receptors. Functions in the canonical Wnt signaling pathway that results in activation of transcription factors of the TCF/LEF family. Required for normal gastrulation, formation of the primitive streak, and for the formation of the mesoderm during early embryogenesis. Required for normal formation of the apical ectodermal ridge. Required for normal embryonic development, and especially for limb development. This Homo sapiens (Human) protein is Proto-oncogene Wnt-3 (WNT3).